Consider the following 346-residue polypeptide: Selenide, water dikinase (346 aa).

Residue U17 is part of the active site. Residue U17 is a non-standard amino acid, selenocysteine. Residues K20 and 47–49 (TSD) each bind ATP. D50 is a Mg(2+) binding site. Residues D67, D90, and 138 to 140 (GHT) each bind ATP. D90 provides a ligand contact to Mg(2+). D226 serves as a coordination point for Mg(2+).

The protein belongs to the selenophosphate synthase 1 family. Class I subfamily. In terms of assembly, homodimer. Mg(2+) serves as cofactor.

The catalysed reaction is hydrogenselenide + ATP + H2O = selenophosphate + AMP + phosphate + 2 H(+). Functionally, synthesizes selenophosphate from selenide and ATP. The chain is Selenide, water dikinase from Trichlorobacter lovleyi (strain ATCC BAA-1151 / DSM 17278 / SZ) (Geobacter lovleyi).